Reading from the N-terminus, the 233-residue chain is Uridylate kinase (233 aa).

7 to 10 (KISG) is an ATP binding site. Gly-49 is a binding site for UMP. ATP-binding residues include Gly-50 and Arg-54. UMP is bound by residues Asp-68 and 129 to 136 (TGNPFFTT). ATP contacts are provided by Thr-156, Tyr-162, and Asp-165.

It belongs to the UMP kinase family. In terms of assembly, homohexamer.

The protein localises to the cytoplasm. It carries out the reaction UMP + ATP = UDP + ADP. The protein operates within pyrimidine metabolism; CTP biosynthesis via de novo pathway; UDP from UMP (UMPK route): step 1/1. Inhibited by UTP. In terms of biological role, catalyzes the reversible phosphorylation of UMP to UDP. This chain is Uridylate kinase, found in Neorickettsia sennetsu (strain ATCC VR-367 / Miyayama) (Ehrlichia sennetsu).